The sequence spans 555 residues: Pyrophosphate--fructose 6-phosphate 1-phosphotransferase (555 aa).

Diphosphate is bound at residue Gly82. Arg146 provides a ligand contact to substrate. Asp176 provides a ligand contact to Mg(2+). Substrate contacts are provided by residues 204-206 (TID), 243-244 (KY), 251-253 (MGR), Glu312, and 428-431 (YEGR). The active-site Proton acceptor is Asp206.

Belongs to the phosphofructokinase type A (PFKA) family. PPi-dependent PFK group II subfamily. Clade 'Long' sub-subfamily. In terms of assembly, homodimer. It depends on Mg(2+) as a cofactor.

It localises to the cytoplasm. The catalysed reaction is beta-D-fructose 6-phosphate + diphosphate = beta-D-fructose 1,6-bisphosphate + phosphate + H(+). The protein operates within carbohydrate degradation; glycolysis; D-glyceraldehyde 3-phosphate and glycerone phosphate from D-glucose: step 3/4. With respect to regulation, non-allosteric. Catalyzes the phosphorylation of D-fructose 6-phosphate, the first committing step of glycolysis. Uses inorganic phosphate (PPi) as phosphoryl donor instead of ATP like common ATP-dependent phosphofructokinases (ATP-PFKs), which renders the reaction reversible, and can thus function both in glycolysis and gluconeogenesis. Consistently, PPi-PFK can replace the enzymes of both the forward (ATP-PFK) and reverse (fructose-bisphosphatase (FBPase)) reactions. The sequence is that of Pyrophosphate--fructose 6-phosphate 1-phosphotransferase from Borreliella burgdorferi (strain ATCC 35210 / DSM 4680 / CIP 102532 / B31) (Borrelia burgdorferi).